A 143-amino-acid chain; its full sequence is Transcriptional regulator MraZ (143 aa).

2 SpoVT-AbrB domains span residues 5 to 47 (SHTP…PLAE) and 76 to 119 (ASDD…DSQR).

This sequence belongs to the MraZ family. As to quaternary structure, forms oligomers.

The protein localises to the cytoplasm. The protein resides in the nucleoid. This Parafrankia sp. (strain EAN1pec) protein is Transcriptional regulator MraZ.